The sequence spans 265 residues: Major pollen allergen Hol l 1 (265 aa).

The first 25 residues, 1 to 25 (MASSSRSVLLLVAALFAVFLGSAHG), serve as a signal peptide directing secretion. Asparagine 34 is a glycosylation site (N-linked (GlcNAc...) asparagine). In terms of domain architecture, Expansin-like EG45 spans 63–169 (GGACGYKDVD…RRVKCKYPDG (107 aa)). The Expansin-like CBD domain occupies 183 to 264 (NYLALLVKYI…GWKADTAYEA (82 aa)).

Belongs to the expansin family. Expansin B subfamily.

It is found in the secreted. This chain is Major pollen allergen Hol l 1, found in Holcus lanatus (Yorkshire-fog).